A 556-amino-acid polypeptide reads, in one-letter code: Portal protein (556 aa).

The disordered stretch occupies residues 527 to 556 (AQGAKTLSETQTSDPSALTAIANAAGAPQQ). Over residues 533–542 (LSETQTSDPS) the composition is skewed to polar residues.

The protein belongs to the podoviridae head-to-tail connector protein family. As to quaternary structure, homododecamer.

It localises to the virion. Functionally, forms the portal vertex of the capsid. This portal plays critical roles in head assembly, genome packaging, neck/tail attachment, and genome ejection. The portal protein multimerizes as a single ring-shaped homododecamer arranged around a central channel. In Salmonella phage epsilon15, this protein is Portal protein.